Reading from the N-terminus, the 435-residue chain is Succinate--CoA ligase [ADP-forming] subunit beta, mitochondrial (435 aa).

The transit peptide at 1-20 (MIGRISQPLLNTSQKFMAPA) directs the protein to the mitochondrion. Positions 32–259 (MKILQNYEIK…SNAEFRQAKL (228 aa)) constitute an ATP-grasp domain. ATP-binding positions include Lys69 and 76 to 78 (GRG). Mg(2+) contacts are provided by Asn229 and Asp243. Residues Asn294 and 352–354 (GIM) contribute to the substrate site.

The protein belongs to the succinate/malate CoA ligase beta subunit family. ATP-specific subunit beta subfamily. As to quaternary structure, heterodimer of an alpha and a beta subunit. The beta subunit determines specificity for ATP. The cofactor is Mg(2+).

The protein resides in the mitochondrion. It carries out the reaction succinate + ATP + CoA = succinyl-CoA + ADP + phosphate. The protein operates within carbohydrate metabolism; tricarboxylic acid cycle; succinate from succinyl-CoA (ligase route): step 1/1. Functionally, ATP-specific succinyl-CoA synthetase functions in the citric acid cycle (TCA), coupling the hydrolysis of succinyl-CoA to the synthesis of ATP and thus represents the only step of substrate-level phosphorylation in the TCA. The beta subunit provides nucleotide specificity of the enzyme and binds the substrate succinate, while the binding sites for coenzyme A and phosphate are found in the alpha subunit. The protein is Succinate--CoA ligase [ADP-forming] subunit beta, mitochondrial of Caenorhabditis elegans.